Consider the following 296-residue polypeptide: Mitochondrial arginine transporter BAC2 (296 aa).

3 Solcar repeats span residues G13–S93, P104–R187, and E198–C282. The next 6 helical transmembrane spans lie at F16–L36, A70–F90, A110–I130, G162–Y181, L204–V224, and T260–L280.

It belongs to the mitochondrial carrier (TC 2.A.29) family. In terms of tissue distribution, high expression in flowers, stamens, petals and pollen. Expressed in roots, leaves and stems.

It localises to the mitochondrion inner membrane. Its activity is regulated as follows. Inhibited by mercuric chloride. Mitochondrial arginine transporter that catalyzes the counter-exchange of arginine with lysine, ornithine, arginine, histidine and citrulline. Substrate preference in reconstituted proteoliposomes is arginine &gt; homoarginine &gt; citrulline &gt; histidine &gt; lysine &gt; ornithine. May be involved in the delivery of arginine, released from seed reserves, to mitochondrial arginase and the export of ornithine. May contribute to proline accumulation in response to hyperosmotic stress. The sequence is that of Mitochondrial arginine transporter BAC2 (BAC2) from Arabidopsis thaliana (Mouse-ear cress).